Here is a 320-residue protein sequence, read N- to C-terminus: Cytochrome f (320 aa).

Positions 1–35 are cleaved as a signal peptide; sequence MQTRNAFSWIKKEITRSISVLLMIYIITRAPISNA. Heme-binding residues include Tyr-36, Cys-56, Cys-59, and His-60. The chain crosses the membrane as a helical span at residues 286–305; sequence VQGLLLFLASIILAQILLVL.

It belongs to the cytochrome f family. In terms of assembly, the 4 large subunits of the cytochrome b6-f complex are cytochrome b6, subunit IV (17 kDa polypeptide, petD), cytochrome f and the Rieske protein, while the 4 small subunits are PetG, PetL, PetM and PetN. The complex functions as a dimer. It depends on heme as a cofactor.

The protein localises to the plastid. It is found in the chloroplast thylakoid membrane. Functionally, component of the cytochrome b6-f complex, which mediates electron transfer between photosystem II (PSII) and photosystem I (PSI), cyclic electron flow around PSI, and state transitions. The polypeptide is Cytochrome f (petA) (Pisum sativum (Garden pea)).